The following is a 389-amino-acid chain: 8-amino-7-oxononanoate synthase 2 (389 aa).

Substrate is bound at residue R21. 108 to 109 (GY) is a pyridoxal 5'-phosphate binding site. Residue H133 coordinates substrate. Residues S180, 205–208 (DDAH), and 234–237 (TLSK) each bind pyridoxal 5'-phosphate. K237 is modified (N6-(pyridoxal phosphate)lysine). T351 is a substrate binding site.

This sequence belongs to the class-II pyridoxal-phosphate-dependent aminotransferase family. BioF subfamily. Homodimer. The cofactor is pyridoxal 5'-phosphate.

The enzyme catalyses 6-carboxyhexanoyl-[ACP] + L-alanine + H(+) = (8S)-8-amino-7-oxononanoate + holo-[ACP] + CO2. It participates in cofactor biosynthesis; biotin biosynthesis. In terms of biological role, catalyzes the decarboxylative condensation of pimeloyl-[acyl-carrier protein] and L-alanine to produce 8-amino-7-oxononanoate (AON), [acyl-carrier protein], and carbon dioxide. In Bacillus subtilis (strain 168), this protein is 8-amino-7-oxononanoate synthase 2 (bioF).